Here is a 218-residue protein sequence, read N- to C-terminus: dTTP/UTP pyrophosphatase (218 aa).

Residues 1–10 (MTASPSSAEG) show a composition bias toward polar residues. Residues 1–20 (MTASPSSAEGSSGLPDRPKL) are disordered. Catalysis depends on aspartate 87, which acts as the Proton acceptor.

It belongs to the Maf family. YhdE subfamily. It depends on a divalent metal cation as a cofactor.

It localises to the cytoplasm. It catalyses the reaction dTTP + H2O = dTMP + diphosphate + H(+). The enzyme catalyses UTP + H2O = UMP + diphosphate + H(+). Nucleoside triphosphate pyrophosphatase that hydrolyzes dTTP and UTP. May have a dual role in cell division arrest and in preventing the incorporation of modified nucleotides into cellular nucleic acids. This chain is dTTP/UTP pyrophosphatase, found in Gluconobacter oxydans (strain 621H) (Gluconobacter suboxydans).